The chain runs to 134 residues: Large-conductance mechanosensitive channel (134 aa).

2 helical membrane-spanning segments follow: residues 10 to 30 (FAMR…GAFG) and 76 to 96 (GAFL…FVVI).

Belongs to the MscL family. Homopentamer.

The protein resides in the cell inner membrane. Channel that opens in response to stretch forces in the membrane lipid bilayer. May participate in the regulation of osmotic pressure changes within the cell. This is Large-conductance mechanosensitive channel from Prosthecochloris aestuarii (strain DSM 271 / SK 413).